Reading from the N-terminus, the 503-residue chain is Maturase K (503 aa).

Belongs to the intron maturase 2 family. MatK subfamily.

It is found in the plastid. The protein localises to the chloroplast. Usually encoded in the trnK tRNA gene intron. Probably assists in splicing its own and other chloroplast group II introns. This is Maturase K from Rosa acicularis (Prickly rose).